The following is a 140-amino-acid chain: Small ribosomal subunit protein uS9 (140 aa).

The protein belongs to the universal ribosomal protein uS9 family.

In Desulfurococcus amylolyticus (strain DSM 18924 / JCM 16383 / VKM B-2413 / 1221n) (Desulfurococcus kamchatkensis), this protein is Small ribosomal subunit protein uS9.